Reading from the N-terminus, the 583-residue chain is Fumarate reductase flavoprotein subunit (583 aa).

FAD-binding positions include 11 to 15 (GGGGA), 35 to 37 (VSK), 43 to 51 (SHTVSAEGG), 155 to 157 (WFA), and Asp211. His44 carries the post-translational modification Tele-8alpha-FAD histidine. Catalysis depends on residues His232 and Arg248. Residues 353-354 (HY), Glu377, and 388-394 (RLGSNSL) each bind FAD.

It belongs to the FAD-dependent oxidoreductase 2 family. FRD/SDH subfamily. Part of an enzyme complex containing four subunits: a flavoprotein (FrdA), an iron-sulfur protein (FrdB), and two hydrophobic anchor proteins (FrdC and FrdD). FAD serves as cofactor.

Its subcellular location is the cell membrane. The catalysed reaction is a quinone + succinate = fumarate + a quinol. It catalyses the reaction a menaquinone + succinate = a menaquinol + fumarate. In Mycobacterium tuberculosis (strain CDC 1551 / Oshkosh), this protein is Fumarate reductase flavoprotein subunit (frdA).